The sequence spans 262 residues: Small ribosomal subunit protein eS4B (262 aa).

Positions 42 to 105 (LPLIVFLRNR…GEHFRLVYDI (64 aa)) constitute an S4 RNA-binding domain. Ser-223 carries the phosphoserine modification.

It belongs to the eukaryotic ribosomal protein eS4 family. As to quaternary structure, component of the small ribosomal subunit (SSU). Mature yeast ribosomes consist of a small (40S) and a large (60S) subunit. The 40S small subunit contains 1 molecule of ribosomal RNA (18S rRNA) and at least 33 different proteins. The large 60S subunit contains 3 rRNA molecules (25S, 5.8S and 5S rRNA) and at least 46 different proteins.

It localises to the cytoplasm. It is found in the nucleus. The protein resides in the nucleolus. Component of the ribosome, a large ribonucleoprotein complex responsible for the synthesis of proteins in the cell. The small ribosomal subunit (SSU) binds messenger RNAs (mRNAs) and translates the encoded message by selecting cognate aminoacyl-transfer RNA (tRNA) molecules. The large subunit (LSU) contains the ribosomal catalytic site termed the peptidyl transferase center (PTC), which catalyzes the formation of peptide bonds, thereby polymerizing the amino acids delivered by tRNAs into a polypeptide chain. The nascent polypeptides leave the ribosome through a tunnel in the LSU and interact with protein factors that function in enzymatic processing, targeting, and the membrane insertion of nascent chains at the exit of the ribosomal tunnel. This is Small ribosomal subunit protein eS4B (rps402) from Schizosaccharomyces pombe (strain 972 / ATCC 24843) (Fission yeast).